We begin with the raw amino-acid sequence, 292 residues long: Thyroxine 5-deiodinase (292 aa).

Over 1 to 30 (VVGEGRGALGGAATMLRSLLLHSLRLCAQT) the chain is Cytoplasmic. The helical; Signal-anchor for type II membrane protein transmembrane segment at 31-50 (ASCLVLFPRFLGTAFMLWLL) threads the bilayer. Residues 51 to 292 (DFLCIRKHLL…QLHGPQPRRV (242 aa)) lie on the Extracellular side of the membrane. Selenocysteine 158 is a catalytic residue. Residue selenocysteine 158 is a non-standard amino acid, selenocysteine.

The protein belongs to the iodothyronine deiodinase family. In terms of assembly, monomer. Homodimer. May undergo minor heretodimerization with DIO1 and DIO2.

The protein localises to the cell membrane. Its subcellular location is the endosome membrane. It carries out the reaction 3,3',5'-triiodo-L-thyronine + iodide + A + H(+) = L-thyroxine + AH2. The catalysed reaction is 3,3'-diiodo-L-thyronine + iodide + A + H(+) = 3,3',5-triiodo-L-thyronine + AH2. The enzyme catalyses 3-iodo-L-thyronine + iodide + A + H(+) = 3,5-diiodo-L-thyronine + AH2. It catalyses the reaction L-thyronine + iodide + A + H(+) = 3-iodo-L-thyronine + AH2. It carries out the reaction 3',5'-diiodo-L-thyronine + iodide + A + H(+) = 3,3',5'-triiodo-L-thyronine + AH2. The catalysed reaction is 3'-iodo-L-thyronine + iodide + A + H(+) = 3,3'-diiodo-L-thyronine + AH2. The enzyme catalyses 3,3',5'-triiodothyronamine + iodide + A + H(+) = 3,3',5,5'-tetraiodothyronamine + AH2. It catalyses the reaction 3',5'-diiodothyronamine + iodide + A + H(+) = 3,3',5'-triiodothyronamine + AH2. It carries out the reaction 3,3'-diiodothyronamine + iodide + A + H(+) = 3,3',5-triiodothyronamine + AH2. The catalysed reaction is 3-iodothyronamine + iodide + A + H(+) = 3,5-diiodothyronamine + AH2. The enzyme catalyses 3'-iodothyronamine + iodide + A + H(+) = 3,3'-diiodothyronamine + AH2. It catalyses the reaction thyronamine + iodide + A + H(+) = 3-iodothyronamine + AH2. Plays a crucial role in the metabolism of thyroid hormones (TH) and has specific roles in TH activation and inactivation by deiodination.Catalyzes the deiodination of L-thyroxine (T4) to 3,3',5'-triiodothyronine (rT3), 3,5,3'-triiodothyronine (T3) to 3,3'-diiodothyronine (3,3'-T2), 3,5-diiodothyronine (3,5-T2) to 3-monoiodothyronine (3-T1), rT3 to 3',5'-diiodothyronine (3',5'-T2) and 3,3'-T2 to 3'-monoiodothyronine (3'-T1) via inner-ring deiodination (IRD). Catalyzes the deiodination of 3-T1 to L-thyronine (T0) via outer-ring deiodination (ORD). Catalyzes the tyrosyl ring deiodinations of 3,3',5,5'-tetraiodothyronamine, 3,3',5'-triiodothyronamine, 3,5,3'-triiodothyronamine, 3,5-diiodothyronamine, 3,3'-diiodothyronamine and 3-iodothyronamine. In Ovis aries (Sheep), this protein is Thyroxine 5-deiodinase (DIO3).